A 93-amino-acid chain; its full sequence is Acyl carrier protein AcpXL (93 aa).

The region spanning 2-88 is the Carrier domain; it reads SSTFDKVADI…NLCAKIDELV (87 aa). Residue S37 is modified to O-(pantetheine 4'-phosphoryl)serine.

4'-phosphopantetheine is transferred from CoA to a specific serine of apo-ACP by AcpS. This modification is essential for activity because fatty acids are bound in thioester linkage to the sulfhydryl of the prosthetic group.

It localises to the cytoplasm. The protein operates within glycolipid biosynthesis; KDO(2)-lipid A biosynthesis. Functionally, carrier of the growing fatty acid chain in fatty acid biosynthesis. Is involved in the transfer of long hydroxylated fatty acids to lipid A. The chain is Acyl carrier protein AcpXL (acpXL) from Brucella melitensis biotype 1 (strain ATCC 23456 / CCUG 17765 / NCTC 10094 / 16M).